Here is a 108-residue protein sequence, read N- to C-terminus: NADH dehydrogenase [ubiquinone] 1 alpha subcomplex subunit 8-A (108 aa).

2 consecutive CHCH domains span residues 28-69 and 70-108; these read GIRC…LKDL and HQRC…CPLK. 3 consecutive short sequence motifs (cx9C motif) follow at residues 31–41, 51–61, and 73–83; these read CMPENMAFLKC, CLEKGRDVTRC, and CPKEMDAYVGC. 4 cysteine pairs are disulfide-bonded: C31–C61, C41–C51, C73–C105, and C83–C94. A Cx10C motif motif is present at residues 94–105; the sequence is CRKEQEAFEKVC.

The protein belongs to the complex I NDUFA8 subunit family. In terms of assembly, complex I is composed of at least 49 different subunits.

It is found in the mitochondrion. The protein resides in the mitochondrion intermembrane space. Functionally, accessory subunit of the mitochondrial membrane respiratory chain NADH dehydrogenase (Complex I), that is believed not to be involved in catalysis. Complex I functions in the transfer of electrons from NADH to the respiratory chain. The immediate electron acceptor for the enzyme is believed to be ubiquinone. The chain is NADH dehydrogenase [ubiquinone] 1 alpha subcomplex subunit 8-A from Arabidopsis thaliana (Mouse-ear cress).